We begin with the raw amino-acid sequence, 81 residues long: uncharacterized protein (81 aa).

This is an uncharacterized protein from Saccharomyces cerevisiae (strain ATCC 204508 / S288c) (Baker's yeast).